Consider the following 59-residue polypeptide: Large ribosomal subunit protein bL33 (59 aa).

It belongs to the bacterial ribosomal protein bL33 family.

This is Large ribosomal subunit protein bL33 from Neorickettsia sennetsu (strain ATCC VR-367 / Miyayama) (Ehrlichia sennetsu).